Reading from the N-terminus, the 610-residue chain is Glutamine--fructose-6-phosphate aminotransferase [isomerizing] (610 aa).

Cys2 acts as the Nucleophile; for GATase activity in catalysis. Residues 2–221 (CGIVGAVAQR…DGDVVDLQLA (220 aa)) form the Glutamine amidotransferase type-2 domain. 2 SIS domains span residues 286–426 (AYKV…TRGR) and 459–600 (WADR…VDKP). Lys605 acts as the For Fru-6P isomerization activity in catalysis.

In terms of assembly, homodimer.

It is found in the cytoplasm. It carries out the reaction D-fructose 6-phosphate + L-glutamine = D-glucosamine 6-phosphate + L-glutamate. Functionally, catalyzes the first step in hexosamine metabolism, converting fructose-6P into glucosamine-6P using glutamine as a nitrogen source. The polypeptide is Glutamine--fructose-6-phosphate aminotransferase [isomerizing] (Bordetella bronchiseptica (strain ATCC BAA-588 / NCTC 13252 / RB50) (Alcaligenes bronchisepticus)).